Consider the following 414-residue polypeptide: Gamma-glutamyl phosphate reductase (414 aa).

This sequence belongs to the gamma-glutamyl phosphate reductase family.

It localises to the cytoplasm. It carries out the reaction L-glutamate 5-semialdehyde + phosphate + NADP(+) = L-glutamyl 5-phosphate + NADPH + H(+). It functions in the pathway amino-acid biosynthesis; L-proline biosynthesis; L-glutamate 5-semialdehyde from L-glutamate: step 2/2. Its function is as follows. Catalyzes the NADPH-dependent reduction of L-glutamate 5-phosphate into L-glutamate 5-semialdehyde and phosphate. The product spontaneously undergoes cyclization to form 1-pyrroline-5-carboxylate. The protein is Gamma-glutamyl phosphate reductase of Francisella philomiragia subsp. philomiragia (strain ATCC 25017 / CCUG 19701 / FSC 153 / O#319-036).